We begin with the raw amino-acid sequence, 509 residues long: Maturase K (509 aa).

It belongs to the intron maturase 2 family. MatK subfamily.

It localises to the plastid. It is found in the chloroplast. Usually encoded in the trnK tRNA gene intron. Probably assists in splicing its own and other chloroplast group II introns. In Nicotiana plumbaginifolia (Leadwort-leaved tobacco), this protein is Maturase K.